The chain runs to 189 residues: Ribosome-recycling factor (189 aa).

The protein belongs to the RRF family.

The protein resides in the cytoplasm. Functionally, responsible for the release of ribosomes from messenger RNA at the termination of protein biosynthesis. May increase the efficiency of translation by recycling ribosomes from one round of translation to another. The sequence is that of Ribosome-recycling factor from Salinibacter ruber (strain DSM 13855 / M31).